Consider the following 715-residue polypeptide: 1,4-alpha-glucan branching enzyme GlgB (715 aa).

The active-site Nucleophile is aspartate 396. The active-site Proton donor is glutamate 449.

The protein belongs to the glycosyl hydrolase 13 family. GlgB subfamily. Monomer.

The catalysed reaction is Transfers a segment of a (1-&gt;4)-alpha-D-glucan chain to a primary hydroxy group in a similar glucan chain.. It participates in glycan biosynthesis; glycogen biosynthesis. Its function is as follows. Catalyzes the formation of the alpha-1,6-glucosidic linkages in glycogen by scission of a 1,4-alpha-linked oligosaccharide from growing alpha-1,4-glucan chains and the subsequent attachment of the oligosaccharide to the alpha-1,6 position. The protein is 1,4-alpha-glucan branching enzyme GlgB of Aliivibrio fischeri (strain ATCC 700601 / ES114) (Vibrio fischeri).